We begin with the raw amino-acid sequence, 1256 residues long: Pullulanase A (1256 aa).

A signal peptide spans 1–44 (MRKTPSHTEKKMVYSIRSLKNGTGSVLIGASLVLLAMATPTISS). The tract at residues 42-117 (ISSDESTPTT…VTTETKAEEP (76 aa)) is disordered. The segment covering 48-61 (TPTTNEPNNRNTTT) has biased composition (low complexity). A compositionally biased stretch (polar residues) spans 79-90 (DISSPRNANASL). The span at 99–111 (TEPTTSTSPVTTE) shows a compositional bias: low complexity. Residues 141–143 (WTW), W153, D199, 248–250 (WYW), W261, K303, and N308 each bind substrate. Ca(2+)-binding residues include S646 and Y648. Residues 652 to 653 (YD) and F728 each bind substrate. The active-site Nucleophile is the D763. E792 (proton donor) is an active-site residue. A substrate-binding site is contributed by W794. Ca(2+)-binding residues include M813, T816, and D817. Substrate contacts are provided by D824, R827, and Y834. Residues D867 and D871 each coordinate Ca(2+). Substrate-binding positions include N881, K954, and 974–976 (DSY). D977 contributes to the Ca(2+) binding site. A disordered region spans residues 1126–1224 (SQNGTSHEST…TPDRQAELPN (99 aa)). A compositionally biased stretch (basic and acidic residues) spans 1134-1172 (STAEEKPDSTPSKPEHQDPAPEARPDSTKPDAKVADAEN). Residues 1181-1194 (SQAEQPAQEAQASS) are compositionally biased toward low complexity. Residues 1200-1210 (QNESVENSSKK) show a composition bias toward polar residues. The short motif at 1222-1226 (LPNTG) is the LPXTG sorting signal element. The residue at position 1225 (T1225) is a Pentaglycyl murein peptidoglycan amidated threonine. A propeptide spans 1226–1256 (GIKNENKLLFAGISLLALLGLGFLLKNKKEN) (removed by sortase).

This sequence belongs to the glycosyl hydrolase 13 family.

The protein resides in the secreted. Its subcellular location is the cell wall. It is found in the cell surface. The catalysed reaction is Hydrolysis of (1-&gt;6)-alpha-D-glucosidic linkages in pullulan, amylopectin and glycogen, and in the alpha- and beta-limit dextrins of amylopectin and glycogen.. Its activity is regulated as follows. Inhibited by 4-O-alpha-D-glucopyranosylmoranoline (G1M). Functionally, virulence factor. Involved in the degradation of glycogen of the mammalian host cells. Hydrolyzes the alpha-1,6-branchpoints of glycogen. Hydrolyzes pullulan. Does not hydrolyze dextran. Binds to mouse lung alveolar type II cells that are rich in glycogen stores. Is an alpha-glucan-specific carbohydrate-binding protein, which binds to amylose (pure alpha-(1,4)-linked glucose), amylopectin (alpha-(1,4)-linked glucose with alpha-(1,6) branch points), pullulan (linear polymer of mixed alpha-(1,4)- and alpha-(1,6)-linked glucose) and glycogen (similar to amylopectin with more frequent alpha-(1,6) branch points) in vitro. Does not bind to dextran (a linear polymer of alpha-(1,6)-linked glucose). The sequence is that of Pullulanase A from Streptococcus pneumoniae serotype 2 (strain D39 / NCTC 7466).